Here is an 83-residue protein sequence, read N- to C-terminus: U5-theraphotoxin-Hs1a 1 (83 aa).

The first 21 residues, 1-21, serve as a signal peptide directing secretion; sequence MKTSMFLTLTGLGLLFVVCYA. The propeptide occupies 22 to 49; that stretch reads SESEEKEFPKELLSSIFAADSDFKVEER. Cystine bridges form between Cys51–Cys63, Cys56–Cys68, and Cys62–Cys75.

It belongs to the neurotoxin 10 (Hwtx-1) family. 51 (Hntx-8) subfamily. Hntx-8 sub-subfamily. Expressed by the venom gland.

The protein resides in the secreted. Agglutinates human and mice erythrocytes. This activity can be specifically inhibited by mannosamine. This lectin shows very low toxicity in both mammals and insects. The protein is U5-theraphotoxin-Hs1a 1 of Cyriopagopus schmidti (Chinese bird spider).